The primary structure comprises 157 residues: Small ribosomal subunit protein uS7 (157 aa).

Belongs to the universal ribosomal protein uS7 family. As to quaternary structure, part of the 30S ribosomal subunit. Contacts proteins S9 and S11.

One of the primary rRNA binding proteins, it binds directly to 16S rRNA where it nucleates assembly of the head domain of the 30S subunit. Is located at the subunit interface close to the decoding center, probably blocks exit of the E-site tRNA. This chain is Small ribosomal subunit protein uS7, found in Caldicellulosiruptor bescii (strain ATCC BAA-1888 / DSM 6725 / KCTC 15123 / Z-1320) (Anaerocellum thermophilum).